The primary structure comprises 180 residues: NADH-quinone oxidoreductase subunit I (180 aa).

4Fe-4S ferredoxin-type domains are found at residues 50–80 (LTRD…LQKT) and 90–119 (EFFR…LTPD). [4Fe-4S] cluster-binding residues include C60, C63, C66, C70, C99, C102, C105, and C109.

This sequence belongs to the complex I 23 kDa subunit family. As to quaternary structure, NDH-1 is composed of 13 different subunits. Subunits NuoA, H, J, K, L, M, N constitute the membrane sector of the complex. The cofactor is [4Fe-4S] cluster.

The protein resides in the cell inner membrane. The catalysed reaction is a quinone + NADH + 5 H(+)(in) = a quinol + NAD(+) + 4 H(+)(out). Its function is as follows. NDH-1 shuttles electrons from NADH, via FMN and iron-sulfur (Fe-S) centers, to quinones in the respiratory chain. The immediate electron acceptor for the enzyme in this species is believed to be ubiquinone. Couples the redox reaction to proton translocation (for every two electrons transferred, four hydrogen ions are translocated across the cytoplasmic membrane), and thus conserves the redox energy in a proton gradient. The polypeptide is NADH-quinone oxidoreductase subunit I (Shigella dysenteriae serotype 1 (strain Sd197)).